A 302-amino-acid polypeptide reads, in one-letter code: tRNA-cytidine(32) 2-sulfurtransferase (302 aa).

Residues 43 to 48 carry the PP-loop motif motif; that stretch reads SGGKDS. Residues Cys-118, Cys-121, and Cys-209 each contribute to the [4Fe-4S] cluster site.

It belongs to the TtcA family. As to quaternary structure, homodimer. It depends on Mg(2+) as a cofactor. [4Fe-4S] cluster serves as cofactor.

The protein resides in the cytoplasm. It carries out the reaction cytidine(32) in tRNA + S-sulfanyl-L-cysteinyl-[cysteine desulfurase] + AH2 + ATP = 2-thiocytidine(32) in tRNA + L-cysteinyl-[cysteine desulfurase] + A + AMP + diphosphate + H(+). The protein operates within tRNA modification. Its function is as follows. Catalyzes the ATP-dependent 2-thiolation of cytidine in position 32 of tRNA, to form 2-thiocytidine (s(2)C32). The sulfur atoms are provided by the cysteine/cysteine desulfurase (IscS) system. This Polynucleobacter asymbioticus (strain DSM 18221 / CIP 109841 / QLW-P1DMWA-1) (Polynucleobacter necessarius subsp. asymbioticus) protein is tRNA-cytidine(32) 2-sulfurtransferase.